We begin with the raw amino-acid sequence, 861 residues long: MEELYHPKKVEQEAQKFWEETDAFKVDEEPGKEKFYCLSMFPYPSGKLHMGHVRNYTIGDVISRYQRMQGKNVLQPMGWDAFGLPAENAALKNNVAPAKWTYENIAYMKNQLKLLGFGYDWNRELATCRPEYYKWEQWFFTRLYEKGLVYKKMSTVNWDPVDETVLANEQVIDGKGWRSGAVVERREIPQWFIKITDYAEQLLNDLDKLENWPEQVKTMQRNWINKSEGVEFHFKLKDHDGDLQVYTTRPDTIMGVTYVAIAPQHPLALEAAASNPQLAKFLDECKNTKVAEADMATMEKRGMDTGFFVIHPLTNEPAPIWVANFVLMDYGSGAVMSVPGHDERDHEFALKYGLPIKQVISVIDADEVDIQEKAITEKGILVNSGEFTGMTSQEAFDAVAEKLTAMGIGEKKINYRLRDWGVSRQRYWGAPIPMMTQEDGTEVPVPLADLPVRLPEDVEMDGVKSPIKADPNWSKRSYNGQPATQETDTFDTFMESSWYYARFCCPNLESAMLDPAAANYWLPVDYYVGGIEHAILHLLYSRFFHKLLRDEGLVDSDEPFKKLLCQGMVIAETFYREDPSSKKTYFNPRDVRVELDTQGNSPKAFLIEDGQPVIIGPKEKMSKSKNNGVDPQELIDKYGADTVRLFTMFAAPPEQSLEWSESGVEGQHRFLRRLWKLVHTHVEKKGAAPLNVAELNETQRTLRRKTHETIKKMTDEFNHRMAINTGIAMVMELLNELSRFEDDSPQGLAVVQEALETAVLVLAPIVPHISHGLWRELGHEDVVMNAPWPQLDEKALEKDSIELVVQVNGKLRARIQAAASANKDELEKLAFDDENVQRFMEDKTVVKVIVVPGKLVNIVVK.

The short motif at 42–52 is the 'HIGH' region element; it reads PYPSGKLHMGH. Residues 620–624 carry the 'KMSKS' region motif; it reads KMSKS. K623 contributes to the ATP binding site.

The protein belongs to the class-I aminoacyl-tRNA synthetase family.

The protein resides in the cytoplasm. It catalyses the reaction tRNA(Leu) + L-leucine + ATP = L-leucyl-tRNA(Leu) + AMP + diphosphate. The protein is Leucine--tRNA ligase of Hahella chejuensis (strain KCTC 2396).